The following is a 189-amino-acid chain: MTNEDVGTNSVADRLQLGPREGVTYPIQMKYCGHCTMPIEYCEYYPEYEKCKEWLELHMPDDFERLKIEEEAAAADGTDDDKKRQKRGGKGLLRVKKKEDVPKRICVSRAARGKKKSVTVVTGLSTFDIDLKVAAKFFGTKFACGSSVTGDDEIVIQGDVKDDLFDVIPEKWAEIDEDVIEDLGDQKRT.

Residues 105–172 (ICVSRAARGK…DLFDVIPEKW (68 aa)) form the SUI1 domain.

Belongs to the DENR family. Interacts with MCTS1.

Its function is as follows. Regulates translation as part of a complex with MCTS1. Specifically required for translational re-initiation in mRNAs containing upstream open reading frames (uORFs). Not required for standard translational initiation. Regulates expression of a subset of gene products including mbc, InR and EcR. This chain is Density-regulated protein homolog, found in Drosophila melanogaster (Fruit fly).